The following is a 495-amino-acid chain: Dipeptide and tripeptide permease A (495 aa).

At 1 to 20 (MTTSALNPLRQPKPFYLIFS) the chain is on the cytoplasmic side. Residues 21 to 41 (IEFWERFGFYGLQGILAVYLV) form a helical membrane-spanning segment. Over 42–51 (KALGLREADS) the chain is Periplasmic. The helical transmembrane segment at 52–72 (FTLFSSFIALVYGLIAVGGWL) threads the bilayer. The Cytoplasmic portion of the chain corresponds to 73 to 81 (GDKVLGTKR). The next 2 membrane-spanning stretches (helical) occupy residues 82-102 (TILLGALVLTAGYAMVTASSE) and 103-123 (HISLLYLGMGTIAVGNGLFKA). The Periplasmic portion of the chain corresponds to 124-145 (NPSSLLSKCYEENDPRLDGAFT). A helical membrane pass occupies residues 146–166 (MYYMAINIGSLLSMLATPWLA). Topologically, residues 167-171 (DQFGY) are cytoplasmic. The chain crosses the membrane as a helical span at residues 172–192 (AHAFALSVVGMLITVANFILM). Residues 193-209 (QGWVKNYGSDADFRTPR) are Periplasmic-facing. Residues 210–230 (LSTWLAVLAGVVAACAAAALL) form a helical membrane-spanning segment. Topologically, residues 231 to 232 (LK) are cytoplasmic. The helical transmembrane segment at 233-253 (HEIIANVVLAVLSIGVVGLYV) threads the bilayer. Residues 254–266 (KETLLLKGAERKK) lie on the Periplasmic side of the membrane. The chain crosses the membrane as a helical span at residues 267–287 (MIVAAILMLQATVFFVLYNQM). Over 288 to 312 (PLSLNFFAIHNTEHMLFGIPVQPEQ) the chain is Cytoplasmic. The helical transmembrane segment at 313-333 (FQSLNPFWIMLASPLLALCYN) threads the bilayer. The Periplasmic segment spans residues 334 to 344 (KLGNRLPMPHK). Residues 345 to 365 (FAIGMVLCAGAFLVLPLGAKY) form a helical membrane-spanning segment. The Cytoplasmic segment spans residues 366–375 (ANAQGLVSSN). Residues 376–396 (WMVLSYLLQSVGELLISGLGL) traverse the membrane as a helical segment. Topologically, residues 397-409 (AMVAQLVPQRLMG) are periplasmic. Residues 410 to 430 (FIMGAWFLTSAASSVIAGWVA) form a helical membrane-spanning segment. The Cytoplasmic segment spans residues 431-451 (GLTAAPDNVTNPLATLEIYSR). A helical membrane pass occupies residues 452–472 (VFTQIGVVTGVIAVVTIIIAP). The Periplasmic segment spans residues 473–495 (WLHRMTLDEKPAHPEHEMALDAR).

Belongs to the major facilitator superfamily. Proton-dependent oligopeptide transporter (POT/PTR) (TC 2.A.17) family. DtpA subfamily.

Its subcellular location is the cell inner membrane. Proton-dependent permease that transports di- and tripeptides. This is Dipeptide and tripeptide permease A from Chromobacterium violaceum (strain ATCC 12472 / DSM 30191 / JCM 1249 / CCUG 213 / NBRC 12614 / NCIMB 9131 / NCTC 9757 / MK).